The sequence spans 109 residues: Large ribosomal subunit protein uL18c (109 aa).

It belongs to the universal ribosomal protein uL18 family. In terms of assembly, part of the 50S ribosomal subunit; contacts the 5S rRNA.

The protein localises to the plastid. Its subcellular location is the chloroplast. Functionally, binds 5S rRNA, forms part of the central protuberance of the 50S subunit. This Cyanidioschyzon merolae (strain NIES-3377 / 10D) (Unicellular red alga) protein is Large ribosomal subunit protein uL18c (rpl18).